The following is a 208-amino-acid chain: MILKFCGIKTKVEALSIRPLNINMVGFIHYPKSKRHLDIEQINKLSRLLPDEIDRVVVLVNPTLQLIKKIINATNINAIQLHGDETIDFIKQLRLNFKNIKIIKALPATQNIINDINQFKEHIDLFIIDTPSEQYGGTGQSFDWTLLKGLDQSIPFLIAGGIDVDKIKQIETLKLNHLGYDISSSIETDGMKDKNKMLTVIQQVKGEL.

The protein belongs to the TrpF family.

It carries out the reaction N-(5-phospho-beta-D-ribosyl)anthranilate = 1-(2-carboxyphenylamino)-1-deoxy-D-ribulose 5-phosphate. Its pathway is amino-acid biosynthesis; L-tryptophan biosynthesis; L-tryptophan from chorismate: step 3/5. The polypeptide is N-(5'-phosphoribosyl)anthranilate isomerase (Staphylococcus haemolyticus (strain JCSC1435)).